Reading from the N-terminus, the 251-residue chain is Ubiquinone/menaquinone biosynthesis C-methyltransferase UbiE (251 aa).

S-adenosyl-L-methionine is bound by residues T74, D95, 123–124 (NA), and S140.

The protein belongs to the class I-like SAM-binding methyltransferase superfamily. MenG/UbiE family.

It catalyses the reaction a 2-demethylmenaquinol + S-adenosyl-L-methionine = a menaquinol + S-adenosyl-L-homocysteine + H(+). The enzyme catalyses a 2-methoxy-6-(all-trans-polyprenyl)benzene-1,4-diol + S-adenosyl-L-methionine = a 5-methoxy-2-methyl-3-(all-trans-polyprenyl)benzene-1,4-diol + S-adenosyl-L-homocysteine + H(+). The protein operates within quinol/quinone metabolism; menaquinone biosynthesis; menaquinol from 1,4-dihydroxy-2-naphthoate: step 2/2. It functions in the pathway cofactor biosynthesis; ubiquinone biosynthesis. Its function is as follows. Methyltransferase required for the conversion of demethylmenaquinol (DMKH2) to menaquinol (MKH2) and the conversion of 2-polyprenyl-6-methoxy-1,4-benzoquinol (DDMQH2) to 2-polyprenyl-3-methyl-6-methoxy-1,4-benzoquinol (DMQH2). This Citrobacter koseri (strain ATCC BAA-895 / CDC 4225-83 / SGSC4696) protein is Ubiquinone/menaquinone biosynthesis C-methyltransferase UbiE.